The sequence spans 389 residues: Anhydro-N-acetylmuramic acid kinase (389 aa).

Residue 11-18 (GTSLDGVD) participates in ATP binding.

The protein belongs to the anhydro-N-acetylmuramic acid kinase family.

It carries out the reaction 1,6-anhydro-N-acetyl-beta-muramate + ATP + H2O = N-acetyl-D-muramate 6-phosphate + ADP + H(+). Its pathway is amino-sugar metabolism; 1,6-anhydro-N-acetylmuramate degradation. It participates in cell wall biogenesis; peptidoglycan recycling. In terms of biological role, catalyzes the specific phosphorylation of 1,6-anhydro-N-acetylmuramic acid (anhMurNAc) with the simultaneous cleavage of the 1,6-anhydro ring, generating MurNAc-6-P. Is required for the utilization of anhMurNAc either imported from the medium or derived from its own cell wall murein, and thus plays a role in cell wall recycling. In Albidiferax ferrireducens (strain ATCC BAA-621 / DSM 15236 / T118) (Rhodoferax ferrireducens), this protein is Anhydro-N-acetylmuramic acid kinase.